Reading from the N-terminus, the 170-residue chain is Acetyl-CoA decarbonylase/synthase complex subunit epsilon 2 (170 aa).

It belongs to the CdhB family. Heterotetramer of two alpha and two epsilon subunits. The ACDS complex is made up of alpha, epsilon, beta, gamma and delta subunits with a probable stoichiometry of (alpha(2)epsilon(2))(4)-beta(8)-(gamma(1)delta(1))(8).

It participates in one-carbon metabolism; methanogenesis from acetate. In terms of biological role, part of a complex that catalyzes the reversible cleavage of acetyl-CoA, allowing growth on acetate as sole source of carbon and energy. The alpha-epsilon subcomponent functions as a carbon monoxide dehydrogenase. The precise role of the epsilon subunit is unclear; it may have a stabilizing role within the alpha(2)epsilon(2) component and/or be involved in electron transfer to FAD during a potential FAD-mediated CO oxidation. The polypeptide is Acetyl-CoA decarbonylase/synthase complex subunit epsilon 2 (cdhB2) (Methanosarcina acetivorans (strain ATCC 35395 / DSM 2834 / JCM 12185 / C2A)).